The sequence spans 344 residues: Probable pectinesterase 67 (344 aa).

The first 23 residues, 1–23 (MGHRTRMILVLTLVVMSIWGSDA), serve as a signal peptide directing secretion. N-linked (GlcNAc...) asparagine glycosylation is found at Asn43 and Asn151. Gln152 lines the substrate pocket. The active-site Nucleophile is Asp196. Residue Arg256 coordinates substrate. Asn282 carries an N-linked (GlcNAc...) asparagine glycan.

Belongs to the pectinesterase family. Expressed in flower buds.

The protein localises to the secreted. It is found in the cell wall. It catalyses the reaction [(1-&gt;4)-alpha-D-galacturonosyl methyl ester](n) + n H2O = [(1-&gt;4)-alpha-D-galacturonosyl](n) + n methanol + n H(+). Its pathway is glycan metabolism; pectin degradation; 2-dehydro-3-deoxy-D-gluconate from pectin: step 1/5. Its function is as follows. Acts in the modification of cell walls via demethylesterification of cell wall pectin. The chain is Probable pectinesterase 67 (PME67) from Arabidopsis thaliana (Mouse-ear cress).